Reading from the N-terminus, the 264-residue chain is Hydroxyethylthiazole kinase (264 aa).

Met43 provides a ligand contact to substrate. 2 residues coordinate ATP: Lys119 and Ser165. Gly192 contacts substrate.

The protein belongs to the Thz kinase family. The cofactor is Mg(2+).

It catalyses the reaction 5-(2-hydroxyethyl)-4-methylthiazole + ATP = 4-methyl-5-(2-phosphooxyethyl)-thiazole + ADP + H(+). The protein operates within cofactor biosynthesis; thiamine diphosphate biosynthesis; 4-methyl-5-(2-phosphoethyl)-thiazole from 5-(2-hydroxyethyl)-4-methylthiazole: step 1/1. Catalyzes the phosphorylation of the hydroxyl group of 4-methyl-5-beta-hydroxyethylthiazole (THZ). This is Hydroxyethylthiazole kinase from Methanocorpusculum labreanum (strain ATCC 43576 / DSM 4855 / Z).